Here is a 492-residue protein sequence, read N- to C-terminus: Cytochrome P450 2A2 (492 aa).

Heme is bound at residue cysteine 437.

The protein belongs to the cytochrome P450 family. It depends on heme as a cofactor. In terms of tissue distribution, liver specific.

It localises to the endoplasmic reticulum membrane. The protein localises to the microsome membrane. It carries out the reaction an organic molecule + reduced [NADPH--hemoprotein reductase] + O2 = an alcohol + oxidized [NADPH--hemoprotein reductase] + H2O + H(+). Highly active in the 15-alpha-hydroxylation of testosterone. This chain is Cytochrome P450 2A2 (Cyp2a2), found in Rattus norvegicus (Rat).